Reading from the N-terminus, the 565-residue chain is Thiol:disulfide interchange protein DsbD (565 aa).

The signal sequence occupies residues 1–19 (MAQRIFTLILLLCSTSVFA). Cystine bridges form between C122/C128 and C182/C304. The next 7 helical transmembrane spans lie at 163–183 (LPFS…TPCV), 208–228 (LLTF…GLVV), 243–263 (YVLI…FGLF), 296–316 (IAGL…LLYI), 323–343 (WLGG…LMLI), 365–385 (FGFV…GDIW), and 386–406 (GLRL…ITSL). The region spanning 434–565 (WAFGATHTAQ…FSAHLRDRQP (132 aa)) is the Thioredoxin domain. Residues C480 and C483 are joined by a disulfide bond.

This sequence belongs to the thioredoxin family. DsbD subfamily.

It is found in the cell inner membrane. It carries out the reaction [protein]-dithiol + NAD(+) = [protein]-disulfide + NADH + H(+). The enzyme catalyses [protein]-dithiol + NADP(+) = [protein]-disulfide + NADPH + H(+). Functionally, required to facilitate the formation of correct disulfide bonds in some periplasmic proteins and for the assembly of the periplasmic c-type cytochromes. Acts by transferring electrons from cytoplasmic thioredoxin to the periplasm. This transfer involves a cascade of disulfide bond formation and reduction steps. In Shigella dysenteriae serotype 1 (strain Sd197), this protein is Thiol:disulfide interchange protein DsbD.